The following is a 193-amino-acid chain: Acyl carrier protein phosphodiesterase (193 aa).

The protein belongs to the AcpH family.

The enzyme catalyses holo-[ACP] + H2O = apo-[ACP] + (R)-4'-phosphopantetheine + H(+). Functionally, converts holo-ACP to apo-ACP by hydrolytic cleavage of the phosphopantetheine prosthetic group from ACP. This chain is Acyl carrier protein phosphodiesterase, found in Serratia proteamaculans (strain 568).